Consider the following 1073-residue polypeptide: Serine/threonine-protein phosphatase 6 regulatory ankyrin repeat subunit C (1073 aa).

28 ANK repeats span residues 7–36 (TDQP…NINV), 40–69 (ERRT…NVNA), 73–102 (VWLT…DVNA), 106–135 (YWQT…TVNV), 139–168 (TGRT…SLST), 172–201 (KDRQ…DVMC), 205–234 (KGYT…EIDE), 238–267 (FGNT…NVNQ), 271–301 (KGFT…DVNF), 305–334 (EGKS…EIDC), 338–367 (YGNT…DTAR), 371–400 (HDMF…LYSI), 422–451 (LGRT…DLRR), 455–484 (FGRT…SINE), 488–544 (KGCT…DPSL), 548–578 (QGYT…CLED), 583–612 (IPVS…NLDV), 616–645 (KGRT…SALV), 650–679 (RKWT…RADI), 686–715 (HGQT…TADA), 719–748 (RGRT…FVLC), 752–781 (KGRT…STDP), 789–818 (SGYS…FAYL), 821–851 (NPFT…KIVN), 856–885 (KGRT…EVDT), 889–919 (LGRT…NITV), 923–952 (NKNT…DLGL), and 959–988 (ALQM…TVLA).

Protein phosphatase 6 (PP6) holoenzyme is proposed to be a heterotrimeric complex formed by the catalytic subunit, a SAPS domain-containing subunit (PP6R) and an ankyrin repeat-domain containing regulatory subunit (ARS).

Functionally, putative regulatory subunit of protein phosphatase 6 (PP6) that may be involved in the recognition of phosphoprotein substrates. The protein is Serine/threonine-protein phosphatase 6 regulatory ankyrin repeat subunit C (ANKRD52) of Gallus gallus (Chicken).